A 265-amino-acid polypeptide reads, in one-letter code: Orotidine 5'-phosphate decarboxylase (265 aa).

Substrate contacts are provided by residues Asp-37, 59 to 61 (KTH), 91 to 100 (DRKFADIGNT), Tyr-217, and Arg-235. The active-site Proton donor is Lys-93.

This sequence belongs to the OMP decarboxylase family.

It carries out the reaction orotidine 5'-phosphate + H(+) = UMP + CO2. The protein operates within pyrimidine metabolism; UMP biosynthesis via de novo pathway; UMP from orotate: step 2/2. This Diutina rugosa (Yeast) protein is Orotidine 5'-phosphate decarboxylase (URA3).